An 84-amino-acid chain; its full sequence is Magnetosome protein MamG (84 aa).

The Cytoplasmic segment spans residues 1–3; it reads MIK. Residues 4–24 form a helical membrane-spanning segment; the sequence is GIAGVGGTALGVGGGVAAPPV. At 25 to 40 the chain is on the lumenal side; that stretch reads SAAAVGSTLLAGKGVC. Residues 41–48 are LG repeat; sequence LGLGLGLG. Residues 41–61 traverse the membrane as a helical segment; it reads LGLGLGLGAWGPVLLGVAGLA. At 62–84 the chain is on the cytoplasmic side; it reads CAASLCDYLKNRKAQAEASAEPA.

It belongs to the magnetosome MamG (TC 9.B.95) protein family.

It localises to the magnetosome membrane. In terms of biological role, plays a role in regulating magnetite crystal size. In Magnetospirillum gryphiswaldense (strain DSM 6361 / JCM 21280 / NBRC 15271 / MSR-1), this protein is Magnetosome protein MamG.